Here is a 302-residue protein sequence, read N- to C-terminus: Olfactory receptor 51H1 (302 aa).

Topologically, residues 1–27 (MTNLNASQANHRNFILTGIPGTPDKNP) are extracellular. Residue Asn-5 is glycosylated (N-linked (GlcNAc...) asparagine). A helical membrane pass occupies residues 28-48 (WLAFPLGFLYTLTLLGNGTIL). The Cytoplasmic segment spans residues 49-56 (AVIKVEPS). The helical transmembrane segment at 57-77 (LHEPTYYFLSILALTDVSLSM) threads the bilayer. Over 78-101 (STLPSMLSIYWFNAPQIVFDACIM) the chain is Extracellular. Cys-99 and Cys-191 are joined by a disulfide. A helical transmembrane segment spans residues 102–122 (QMFFIHVFGIVESGVLVSMAF). At 123-141 (DRFVAIRNPLHYVSILTHD) the chain is on the cytoplasmic side. Residues 142-162 (VIRKTGIAVLTRAVCVVFPVP) traverse the membrane as a helical segment. Over 163–198 (FLIKCLPFCHSNVLSHSYCLHQNMMRLACASTRINS) the chain is Extracellular. The chain crosses the membrane as a helical span at residues 199–219 (LYGLIVVIFTLGLDVLLTLLS). Over 220-239 (YVLTLKTVLGIVSRGERLKT) the chain is Cytoplasmic. Residues 240-260 (LSTCLSHMSTVLLFYVPFMGA) form a helical membrane-spanning segment. Residues 261 to 276 (ASMIHRFWEHLSPVVH) are Extracellular-facing. Residues 277-297 (MVMADIYLLLPPVLNPIVYSV) form a helical membrane-spanning segment. Residues 298 to 302 (KTKQI) lie on the Cytoplasmic side of the membrane.

Belongs to the G-protein coupled receptor 1 family.

It is found in the cell membrane. Odorant receptor. The sequence is that of Olfactory receptor 51H1 (OR51H1) from Homo sapiens (Human).